Here is a 328-residue protein sequence, read N- to C-terminus: Probable fused nickel transport protein LarMN (328 aa).

A run of 8 helical transmembrane segments spans residues 8 to 28, 42 to 62, 75 to 95, 103 to 123, 138 to 158, 187 to 207, 229 to 249, and 296 to 316; these read LSPA…TVAV, LPML…NLPI, LLAV…TLLL, GGIL…PFVG, LGLA…AGIE, MLTA…LLVF, PWIA…LASN, and PVSV…LLLI.

This sequence belongs to the CbiM family. NikM subfamily. May form an energy-coupling factor (ECF) transporter complex composed of an ATP-binding protein (A component, LarO), a transmembrane protein (T component, LarQ) and a fused possible substrate-capture protein (S component, LarMN) of unknown stoichiometry.

It is found in the cell membrane. Functionally, probably part of the energy-coupling factor (ECF) transporter complex LarMNQO involved in nickel import. This is Probable fused nickel transport protein LarMN from Lactiplantibacillus plantarum (strain ATCC BAA-793 / NCIMB 8826 / WCFS1) (Lactobacillus plantarum).